Reading from the N-terminus, the 188-residue chain is Putative manganese efflux pump MntP (188 aa).

6 consecutive transmembrane segments (helical) span residues phenylalanine 3–alanine 23, isoleucine 35–valine 55, phenylalanine 63–methionine 83, valine 107–methionine 127, isoleucine 131–alanine 151, and alanine 167–isoleucine 187.

Belongs to the MntP (TC 9.B.29) family.

It is found in the cell inner membrane. Functionally, probably functions as a manganese efflux pump. The polypeptide is Putative manganese efflux pump MntP (Neisseria meningitidis serogroup A / serotype 4A (strain DSM 15465 / Z2491)).